Consider the following 145-residue polypeptide: Large ribosomal subunit protein uL15 (145 aa).

Composition is skewed to basic residues over residues 1–13 (MIRKTKKIRKQRG) and 22–33 (TKKRRGAGHRGG). A disordered region spans residues 1–41 (MIRKTKKIRKQRGSRSVGGGCTKKRRGAGHRGGRGQAGGNK).

This sequence belongs to the universal ribosomal protein uL15 family. As to quaternary structure, part of the 50S ribosomal subunit.

Functionally, binds to the 23S rRNA. The polypeptide is Large ribosomal subunit protein uL15 (Methanosphaera stadtmanae (strain ATCC 43021 / DSM 3091 / JCM 11832 / MCB-3)).